We begin with the raw amino-acid sequence, 243 residues long: ADP-ribosylation factor-like protein 10 (243 aa).

Residues 83 to 90 (GLDGSGKS), 127 to 131 (EIGGS), and 184 to 187 (NKQD) contribute to the GTP site.

The protein belongs to the small GTPase superfamily. Arf family.

This chain is ADP-ribosylation factor-like protein 10 (Arl10), found in Mus musculus (Mouse).